Reading from the N-terminus, the 166-residue chain is Cyanate hydratase (166 aa).

Active-site residues include Arg-92, Glu-95, and Ser-118.

Belongs to the cyanase family.

It catalyses the reaction cyanate + hydrogencarbonate + 3 H(+) = NH4(+) + 2 CO2. In terms of biological role, catalyzes the reaction of cyanate with bicarbonate to produce ammonia and carbon dioxide. The polypeptide is Cyanate hydratase (Sorghum bicolor (Sorghum)).